The following is a 1060-amino-acid chain: Beta-galactosidase (1060 aa).

Substrate is bound by residues N110 and D209. D209 contacts Na(+). The Mg(2+) site is built by E432, H434, and E477. Substrate-binding positions include E477 and 553-556; that span reads EYAH. E477 acts as the Proton donor in catalysis. Catalysis depends on E553, which acts as the Nucleophile. N613 is a binding site for Mg(2+). Residues F617 and N620 each contribute to the Na(+) site. The substrate site is built by N620 and W1035.

Belongs to the glycosyl hydrolase 2 family. In terms of assembly, homotetramer. Requires Mg(2+) as cofactor. The cofactor is Na(+).

The enzyme catalyses Hydrolysis of terminal non-reducing beta-D-galactose residues in beta-D-galactosides.. The chain is Beta-galactosidase from Yersinia pestis bv. Antiqua (strain Antiqua).